A 141-amino-acid chain; its full sequence is UPF0102 protein BRADO0179 (141 aa).

A disordered region spans residues 1–24 (MAETDRATDKPAGAPKPAKTASPE). Low complexity predominate over residues 10–19 (KPAGAPKPAK).

This sequence belongs to the UPF0102 family.

In Bradyrhizobium sp. (strain ORS 278), this protein is UPF0102 protein BRADO0179.